Here is a 370-residue protein sequence, read N- to C-terminus: Anhydro-N-acetylmuramic acid kinase (370 aa).

Position 13–20 (13–20 (GTSMDGVD)) interacts with ATP.

This sequence belongs to the anhydro-N-acetylmuramic acid kinase family.

The catalysed reaction is 1,6-anhydro-N-acetyl-beta-muramate + ATP + H2O = N-acetyl-D-muramate 6-phosphate + ADP + H(+). It participates in amino-sugar metabolism; 1,6-anhydro-N-acetylmuramate degradation. The protein operates within cell wall biogenesis; peptidoglycan recycling. Its function is as follows. Catalyzes the specific phosphorylation of 1,6-anhydro-N-acetylmuramic acid (anhMurNAc) with the simultaneous cleavage of the 1,6-anhydro ring, generating MurNAc-6-P. Is required for the utilization of anhMurNAc either imported from the medium or derived from its own cell wall murein, and thus plays a role in cell wall recycling. This chain is Anhydro-N-acetylmuramic acid kinase, found in Shewanella frigidimarina (strain NCIMB 400).